The following is a 39-amino-acid chain: Photosystem II reaction center protein X (39 aa).

Residues 10-30 form a helical membrane-spanning segment; it reads SSLVWAAVIVVIPAAVALVLI.

Belongs to the PsbX family. Type 1 subfamily. As to quaternary structure, PSII is composed of 1 copy each of membrane proteins PsbA, PsbB, PsbC, PsbD, PsbE, PsbF, PsbH, PsbI, PsbJ, PsbK, PsbL, PsbM, PsbT, PsbX, PsbY, Psb30/Ycf12, peripheral proteins PsbO, CyanoQ (PsbQ), PsbU, PsbV and a large number of cofactors. It forms dimeric complexes.

Its subcellular location is the cellular thylakoid membrane. In terms of biological role, involved in the binding and/or turnover of quinones at the Q(B) site of photosystem II (PSII). PSII is a light-driven water plastoquinone oxidoreductase, using light energy to abstract electrons from H(2)O, generating a proton gradient subsequently used for ATP formation. In Prochlorococcus marinus (strain MIT 9303), this protein is Photosystem II reaction center protein X.